We begin with the raw amino-acid sequence, 108 residues long: Trp operon repressor homolog (108 aa).

Residues 59–82 (QRQISQLLGVGVATITRGSNELKS) mediate DNA binding.

It belongs to the TrpR family. As to quaternary structure, homodimer.

Its subcellular location is the cytoplasm. In terms of biological role, this protein is an aporepressor. When complexed with L-tryptophan it binds the operator region of the trp operon and prevents the initiation of transcription. The protein is Trp operon repressor homolog of Aliivibrio fischeri (strain ATCC 700601 / ES114) (Vibrio fischeri).